The following is a 174-amino-acid chain: Matrix protein (174 aa).

As to quaternary structure, homomultimer. Interacts with nucleoprotein and with the cytoplasmic domain of glycoprotein.

The protein localises to the virion membrane. It is found in the host endomembrane system. Plays a major role in assembly and budding of virion. Completely covers the ribonucleoprotein coil and keep it in condensed bullet-shaped form. Inhibits viral transcription and stimulates replication. In Hordeum vulgare (Barley), this protein is Matrix protein (M).